We begin with the raw amino-acid sequence, 356 residues long: Arginine kinase Lit v 2 (356 aa).

The region spanning 9–91 (KLEAGFKKLE…FDPIIEDYHV (83 aa)) is the Phosphagen kinase N-terminal domain. 64–68 (GVGIY) is a binding site for L-arginine. The 238-residue stretch at 119 to 356 (FVISTRVRCG…LELIKMEKEM (238 aa)) folds into the Phosphagen kinase C-terminal domain. ATP contacts are provided by residues 122–126 (STRVR) and His-185. Glu-225 is a binding site for L-arginine. Arg-229 lines the ATP pocket. An L-arginine-binding site is contributed by Cys-271. ATP-binding positions include 280–284 (RASVH) and 309–314 (RGTRGE). Residue Glu-314 participates in L-arginine binding.

The protein belongs to the ATP:guanido phosphotransferase family. As to expression, expressed in muscle (at protein level). Expressed in muscle, heart, nerve, stomach and hemocytes, with the highest expression in muscle. Very low expression in eyestalk and intestine. Not expressed in hepatopancreas, gill and skin.

It carries out the reaction L-arginine + ATP = N(omega)-phospho-L-arginine + ADP + H(+). No change in activity after supplementation with 10 mM glucose. However, activity decreases significantly when glucose concentration is higher than 50 mM and almost all activity is lost with 200 mM glucose. Activity is significantly increased after treatment with 10 mM and 50 mM ATP. However, activity drops significantly with 200 mM ATP. Inhibited by 10-200 mM alpha-ketoglutarate. No change in activity after incubation with 10-200 mM L-citrulline, L-ornaline or glycerol. Its function is as follows. Catalyzes the reversible transfer of high energy ATP gamma-phosphate group to L-arginine. This chain is Arginine kinase Lit v 2, found in Penaeus vannamei (Whiteleg shrimp).